Reading from the N-terminus, the 31-residue chain is Photosystem II reaction center protein T (31 aa).

Residues 3 to 23 (SFAYILILTLAIATLFFAIAF) form a helical membrane-spanning segment.

The protein belongs to the PsbT family. In terms of assembly, PSII is composed of 1 copy each of membrane proteins PsbA, PsbB, PsbC, PsbD, PsbE, PsbF, PsbH, PsbI, PsbJ, PsbK, PsbL, PsbM, PsbT, PsbX, PsbY, PsbZ, Psb30/Ycf12, peripheral proteins PsbO, CyanoQ (PsbQ), PsbU, PsbV and a large number of cofactors. It forms dimeric complexes.

The protein resides in the cellular thylakoid membrane. Found at the monomer-monomer interface of the photosystem II (PS II) dimer, plays a role in assembly and dimerization of PSII. PSII is a light-driven water plastoquinone oxidoreductase, using light energy to abstract electrons from H(2)O, generating a proton gradient subsequently used for ATP formation. The chain is Photosystem II reaction center protein T from Synechococcus sp. (strain WH7803).